The chain runs to 264 residues: Thymidylate synthase (264 aa).

R21 serves as a coordination point for dUMP. H51 provides a ligand contact to (6R)-5,10-methylene-5,6,7,8-tetrahydrofolate. A dUMP-binding site is contributed by 126-127 (RR). The Nucleophile role is filled by C146. DUMP contacts are provided by residues 166–169 (RSCD), N177, and 207–209 (HLY). (6R)-5,10-methylene-5,6,7,8-tetrahydrofolate is bound at residue D169. S263 serves as a coordination point for (6R)-5,10-methylene-5,6,7,8-tetrahydrofolate.

Belongs to the thymidylate synthase family. Bacterial-type ThyA subfamily. In terms of assembly, homodimer.

Its subcellular location is the cytoplasm. The catalysed reaction is dUMP + (6R)-5,10-methylene-5,6,7,8-tetrahydrofolate = 7,8-dihydrofolate + dTMP. It participates in pyrimidine metabolism; dTTP biosynthesis. In terms of biological role, catalyzes the reductive methylation of 2'-deoxyuridine-5'-monophosphate (dUMP) to 2'-deoxythymidine-5'-monophosphate (dTMP) while utilizing 5,10-methylenetetrahydrofolate (mTHF) as the methyl donor and reductant in the reaction, yielding dihydrofolate (DHF) as a by-product. This enzymatic reaction provides an intracellular de novo source of dTMP, an essential precursor for DNA biosynthesis. This is Thymidylate synthase from Buchnera aphidicola subsp. Acyrthosiphon pisum (strain 5A).